The sequence spans 117 residues: Large ribosomal subunit protein uL22c (117 aa).

This sequence belongs to the universal ribosomal protein uL22 family. As to quaternary structure, part of the 50S ribosomal subunit.

It is found in the plastid. Its subcellular location is the chloroplast. In terms of biological role, this protein binds specifically to 23S rRNA. The globular domain of the protein is located near the polypeptide exit tunnel on the outside of the subunit, while an extended beta-hairpin is found that lines the wall of the exit tunnel in the center of the 70S ribosome. The protein is Large ribosomal subunit protein uL22c (rpl22) of Pyropia yezoensis (Susabi-nori).